The chain runs to 208 residues: N-(5'-phosphoribosyl)anthranilate isomerase (208 aa).

It belongs to the TrpF family.

The enzyme catalyses N-(5-phospho-beta-D-ribosyl)anthranilate = 1-(2-carboxyphenylamino)-1-deoxy-D-ribulose 5-phosphate. It functions in the pathway amino-acid biosynthesis; L-tryptophan biosynthesis; L-tryptophan from chorismate: step 3/5. In Neisseria gonorrhoeae (strain ATCC 700825 / FA 1090), this protein is N-(5'-phosphoribosyl)anthranilate isomerase.